Here is a 93-residue protein sequence, read N- to C-terminus: Small ribosomal subunit protein uS19 (93 aa).

The protein belongs to the universal ribosomal protein uS19 family.

Its function is as follows. Protein S19 forms a complex with S13 that binds strongly to the 16S ribosomal RNA. This chain is Small ribosomal subunit protein uS19, found in Ehrlichia chaffeensis (strain ATCC CRL-10679 / Arkansas).